The chain runs to 80 residues: Cell division protein ZapB (80 aa).

A coiled-coil region spans residues 3–80; that stretch reads LEILEQLEAK…GLLGKMDEVE (78 aa). The disordered stretch occupies residues 41–60; that stretch reads LEQANNGRSEVEQEAQRARD. The span at 49-60 shows a compositional bias: basic and acidic residues; that stretch reads SEVEQEAQRARD.

The protein belongs to the ZapB family. Homodimer. The ends of the coiled-coil dimer bind to each other, forming polymers. Interacts with FtsZ.

Its subcellular location is the cytoplasm. Functionally, non-essential, abundant cell division factor that is required for proper Z-ring formation. It is recruited early to the divisome by direct interaction with FtsZ, stimulating Z-ring assembly and thereby promoting cell division earlier in the cell cycle. Its recruitment to the Z-ring requires functional FtsA or ZipA. The protein is Cell division protein ZapB of Aliivibrio fischeri (strain ATCC 700601 / ES114) (Vibrio fischeri).